Consider the following 91-residue polypeptide: ATP synthase subunit c (91 aa).

Transmembrane regions (helical) follow at residues 4–24 (FTMC…GTGI) and 53–73 (IGLA…LIIL).

The protein belongs to the ATPase C chain family. F-type ATPases have 2 components, F(1) - the catalytic core - and F(0) - the membrane proton channel. F(1) has five subunits: alpha(3), beta(3), gamma(1), delta(1), epsilon(1). F(0) has three main subunits: a(1), b(2) and c(10-14). The alpha and beta chains form an alternating ring which encloses part of the gamma chain. F(1) is attached to F(0) by a central stalk formed by the gamma and epsilon chains, while a peripheral stalk is formed by the delta and b chains.

The protein localises to the cell inner membrane. Its function is as follows. F(1)F(0) ATP synthase produces ATP from ADP in the presence of a proton or sodium gradient. F-type ATPases consist of two structural domains, F(1) containing the extramembraneous catalytic core and F(0) containing the membrane proton channel, linked together by a central stalk and a peripheral stalk. During catalysis, ATP synthesis in the catalytic domain of F(1) is coupled via a rotary mechanism of the central stalk subunits to proton translocation. Key component of the F(0) channel; it plays a direct role in translocation across the membrane. A homomeric c-ring of between 10-14 subunits forms the central stalk rotor element with the F(1) delta and epsilon subunits. In Geobacter sulfurreducens (strain ATCC 51573 / DSM 12127 / PCA), this protein is ATP synthase subunit c.